We begin with the raw amino-acid sequence, 458 residues long: Smoothelin-like protein 2 (458 aa).

The stretch at 24–88 (LEGAVRALHE…RQVESLGLTT (65 aa)) forms a coiled coil. Disordered regions lie at residues 87–111 (TTGL…RAPR), 123–142 (FSLS…SELE), and 151–312 (IIEN…GAQA). Over residues 94 to 104 (PGTPSPPPAPG) the composition is skewed to pro residues. Residue Thr96 is modified to Phosphothreonine. Residues Ser98, Ser126, and Ser131 each carry the phosphoserine modification. Residues 131 to 142 (SLDHHDEASELE) show a composition bias toward basic and acidic residues. 2 stretches are compositionally biased toward low complexity: residues 158–167 (PGADPGDGPP) and 209–220 (TSATALSPTSAA). Residues 225–244 (LSSSPSEATTPWTPSPSEKN) are compositionally biased toward polar residues. Residues 245–254 (SSLPRSLSSS) show a composition bias toward low complexity. Ser252, Ser254, and Ser267 each carry phosphoserine. The span at 270–283 (LVTPPQSPPSPQPP) shows a compositional bias: pro residues. Phosphothreonine is present on Thr272. Ser276 is subject to Phosphoserine. A compositionally biased stretch (basic and acidic residues) spans 290–299 (RPGERRRELV). A compositionally biased stretch (polar residues) spans 300–310 (RSQTLPRTSGA). A Phosphoserine modification is found at Ser341. Positions 348–455 (SSIKQILLEW…YVQSLYNHLR (108 aa)) constitute a Calponin-homology (CH) domain.

Belongs to the smoothelin family.

This Bos taurus (Bovine) protein is Smoothelin-like protein 2 (SMTNL2).